We begin with the raw amino-acid sequence, 426 residues long: Serine--tRNA ligase (426 aa).

The interval 44-67 is disordered; the sequence is TEKQALQSERNATSKQIGMLKKKG. Residues 47–59 show a composition bias toward polar residues; that stretch reads QALQSERNATSKQ. 231-233 contributes to the L-serine binding site; that stretch reads TAE. Residues 262–264 and Val-278 each bind ATP; that span reads RRE. Glu-285 is an L-serine binding site. Residue 349 to 352 participates in ATP binding; that stretch reads EVSS. An L-serine-binding site is contributed by Ser-384.

The protein belongs to the class-II aminoacyl-tRNA synthetase family. Type-1 seryl-tRNA synthetase subfamily. Homodimer. The tRNA molecule binds across the dimer.

It is found in the cytoplasm. It catalyses the reaction tRNA(Ser) + L-serine + ATP = L-seryl-tRNA(Ser) + AMP + diphosphate + H(+). The catalysed reaction is tRNA(Sec) + L-serine + ATP = L-seryl-tRNA(Sec) + AMP + diphosphate + H(+). The protein operates within aminoacyl-tRNA biosynthesis; selenocysteinyl-tRNA(Sec) biosynthesis; L-seryl-tRNA(Sec) from L-serine and tRNA(Sec): step 1/1. Catalyzes the attachment of serine to tRNA(Ser). Is also able to aminoacylate tRNA(Sec) with serine, to form the misacylated tRNA L-seryl-tRNA(Sec), which will be further converted into selenocysteinyl-tRNA(Sec). The sequence is that of Serine--tRNA ligase from Akkermansia muciniphila (strain ATCC BAA-835 / DSM 22959 / JCM 33894 / BCRC 81048 / CCUG 64013 / CIP 107961 / Muc).